The chain runs to 87 residues: Small ribosomal subunit protein uS17 (87 aa).

The protein belongs to the universal ribosomal protein uS17 family. Part of the 30S ribosomal subunit.

Its function is as follows. One of the primary rRNA binding proteins, it binds specifically to the 5'-end of 16S ribosomal RNA. The sequence is that of Small ribosomal subunit protein uS17 from Thiobacillus denitrificans (strain ATCC 25259 / T1).